Consider the following 408-residue polypeptide: Type II methyltransferase M.VspI (408 aa).

This sequence belongs to the N(4)/N(6)-methyltransferase family.

It carries out the reaction a 2'-deoxyadenosine in DNA + S-adenosyl-L-methionine = an N(6)-methyl-2'-deoxyadenosine in DNA + S-adenosyl-L-homocysteine + H(+). A gamma subtype methylase, recognizes the double-stranded sequence 5'-ATTAAT-3', methylates A-5 on both strands, and protects the DNA from cleavage by the VspI endonuclease. In Vibrio sp. (strain 343), this protein is Type II methyltransferase M.VspI.